The chain runs to 94 residues: DNA-directed RNA polymerase subunit omega (94 aa).

This sequence belongs to the RNA polymerase subunit omega family. As to quaternary structure, the RNAP catalytic core consists of 2 alpha, 1 beta, 1 beta' and 1 omega subunit. When a sigma factor is associated with the core the holoenzyme is formed, which can initiate transcription.

The catalysed reaction is RNA(n) + a ribonucleoside 5'-triphosphate = RNA(n+1) + diphosphate. Its function is as follows. Promotes RNA polymerase assembly. Latches the N- and C-terminal regions of the beta' subunit thereby facilitating its interaction with the beta and alpha subunits. This Limosilactobacillus fermentum (strain NBRC 3956 / LMG 18251) (Lactobacillus fermentum) protein is DNA-directed RNA polymerase subunit omega.